The following is a 115-amino-acid chain: Autophagy-related protein 8i (115 aa).

Residue Gly-115 is the site of Phosphatidylethanolamine amidated glycine attachment.

The protein belongs to the ATG8 family. As to quaternary structure, interacts with ATG4. Interacts with NBR1. Post-translationally, gly-115 forms then a thioester bond with the 'Cys-558' of ATG7 (E1-like activating enzyme) before being transferred to the 'Cys-258' of ATG3 (the specific E2 conjugating enzyme), in order to be finally amidated with phosphatidylethanolamine. This lipid modification anchors ATG8 to autophagosomes. In terms of tissue distribution, constitutively expressed.

It localises to the cytoplasmic vesicle. The protein resides in the autophagosome membrane. The protein localises to the vacuole membrane. Its subcellular location is the cytoplasm. It is found in the cytoskeleton. Functionally, ubiquitin-like modifier involved in autophagosomes formation. May mediate the delivery of the autophagosomes to the vacuole via the microtubule cytoskeleton. The sequence is that of Autophagy-related protein 8i (ATG8I) from Arabidopsis thaliana (Mouse-ear cress).